Reading from the N-terminus, the 601-residue chain is DNA ligase 2 (601 aa).

Residue Glu263 coordinates ATP. Lys265 serves as the catalytic N6-AMP-lysine intermediate. ATP-binding residues include Arg270, Arg285, Glu314, Phe354, Arg432, and Lys438.

The protein belongs to the ATP-dependent DNA ligase family. It depends on Mg(2+) as a cofactor.

The catalysed reaction is ATP + (deoxyribonucleotide)n-3'-hydroxyl + 5'-phospho-(deoxyribonucleotide)m = (deoxyribonucleotide)n+m + AMP + diphosphate.. In terms of biological role, DNA ligase that seals nicks in double-stranded DNA during DNA replication, DNA recombination and DNA repair. The polypeptide is DNA ligase 2 (Thermofilum pendens (strain DSM 2475 / Hrk 5)).